The chain runs to 66 residues: Large ribosomal subunit protein bL35 (66 aa).

The segment at 19–45 (SGKVVAAQSTKRHGMTKRSKRSLRTRR) is disordered. A compositionally biased stretch (basic residues) spans 28–45 (TKRHGMTKRSKRSLRTRR).

The protein belongs to the bacterial ribosomal protein bL35 family.

The chain is Large ribosomal subunit protein bL35 from Anaplasma phagocytophilum (strain HZ).